A 37-amino-acid chain; its full sequence is Large ribosomal subunit protein bL36 (37 aa).

The protein belongs to the bacterial ribosomal protein bL36 family.

The polypeptide is Large ribosomal subunit protein bL36 (Thermus thermophilus (strain ATCC BAA-163 / DSM 7039 / HB27)).